The sequence spans 334 residues: Phosphate acyltransferase (334 aa).

It belongs to the PlsX family. Homodimer. Probably interacts with PlsY.

Its subcellular location is the cytoplasm. The catalysed reaction is a fatty acyl-[ACP] + phosphate = an acyl phosphate + holo-[ACP]. Its pathway is lipid metabolism; phospholipid metabolism. In terms of biological role, catalyzes the reversible formation of acyl-phosphate (acyl-PO(4)) from acyl-[acyl-carrier-protein] (acyl-ACP). This enzyme utilizes acyl-ACP as fatty acyl donor, but not acyl-CoA. This is Phosphate acyltransferase from Thermotoga petrophila (strain ATCC BAA-488 / DSM 13995 / JCM 10881 / RKU-1).